A 672-amino-acid chain; its full sequence is Ubiquitin carboxyl-terminal hydrolase 19 (672 aa).

Residues 11-31 (NSFTQLILTLFFVSIGLLYFV) form a helical membrane-spanning segment. The Zn(2+) site is built by Cys64, Cys67, Cys75, Cys78, Cys84, Cys88, His97, and Cys101. The MYND-type zinc finger occupies 64 to 101 (CSVCGKATTKKCSRCKSVRYCSAACQTSDWKSGHKLKC). Residues 174-480 (CGLTNCGNSC…RAYMLLYSRV (307 aa)) enclose the USP domain. Cys183 acts as the Nucleophile in catalysis. The Proton acceptor role is filled by His439. The segment at 484-672 (PSNLRSEESQ…HSDTEMIDAQ (189 aa)) is disordered. Residues 488–499 (RSEESQDEKKTD) are compositionally biased toward basic and acidic residues. The segment covering 500–527 (TLNTESNQDGSVESSGVGTNDTSVSSLC) has biased composition (polar residues). 2 stretches are compositionally biased toward basic and acidic residues: residues 533–543 (HSEDPEYEKES) and 553–594 (EEGK…KEDP). Polar residues predominate over residues 606-615 (LDITTPSPSA). Positions 623 to 666 (ENERSDTESKPLEKEHSDTESNKPLEKEHLDSESKPLEKEHSDT) are enriched in basic and acidic residues.

Belongs to the peptidase C19 family.

It is found in the membrane. It carries out the reaction Thiol-dependent hydrolysis of ester, thioester, amide, peptide and isopeptide bonds formed by the C-terminal Gly of ubiquitin (a 76-residue protein attached to proteins as an intracellular targeting signal).. In terms of biological role, recognizes and hydrolyzes the peptide bond at the C-terminal Gly of ubiquitin. Involved in the processing of poly-ubiquitin precursors as well as that of ubiquitinated proteins. In Arabidopsis thaliana (Mouse-ear cress), this protein is Ubiquitin carboxyl-terminal hydrolase 19 (UBP19).